The primary structure comprises 142 residues: 5a,11a-dehydrotetracycline/5a,11a-dehydrooxytetracycline reductase (142 aa).

Belongs to the pyridoxamine 5'-phosphate oxidase family.

The enzyme catalyses tetracycline + oxidized coenzyme F420-(gamma-L-Glu)(n) + H(+) = 5a,11a-dehydrotetracycline + reduced coenzyme F420-(gamma-L-Glu)(n). It carries out the reaction oxytetracycline + oxidized coenzyme F420-(gamma-L-Glu)(n) + H(+) = 5a,11a-dehydrooxytetracycline + reduced coenzyme F420-(gamma-L-Glu)(n). Its pathway is antibiotic biosynthesis; oxytetracycline biosynthesis. Its function is as follows. Involved in the biosynthesis of the antibiotics tetracycline and oxytetracycline. Catalyzes the C(5) reduction of 5a,11a-dehydrooxytetracycline to yield oxytetracycline as a major product. Also catalyzes the C(12) reduction of 5a,11a-dehydrotetracycline (12-dehydrotetracycline) to produce tetracycline as a minor product. This is 5a,11a-dehydrotetracycline/5a,11a-dehydrooxytetracycline reductase from Streptomyces rimosus subsp. rimosus (strain ATCC 10970 / DSM 40260 / JCM 4667 / NRRL 2234).